A 435-amino-acid chain; its full sequence is 3-phosphoshikimate 1-carboxyvinyltransferase (435 aa).

Residues Lys28, Ser29, and Arg33 each contribute to the 3-phosphoshikimate site. Position 28 (Lys28) interacts with phosphoenolpyruvate. The phosphoenolpyruvate site is built by Gly100 and Arg128. Residues Ser173, Gln175, Asp321, and Lys348 each contribute to the 3-phosphoshikimate site. Gln175 provides a ligand contact to phosphoenolpyruvate. The Proton acceptor role is filled by Asp321. Phosphoenolpyruvate contacts are provided by Arg352 and Arg394.

The protein belongs to the EPSP synthase family. Monomer.

Its subcellular location is the cytoplasm. The enzyme catalyses 3-phosphoshikimate + phosphoenolpyruvate = 5-O-(1-carboxyvinyl)-3-phosphoshikimate + phosphate. It functions in the pathway metabolic intermediate biosynthesis; chorismate biosynthesis; chorismate from D-erythrose 4-phosphate and phosphoenolpyruvate: step 6/7. Its function is as follows. Catalyzes the transfer of the enolpyruvyl moiety of phosphoenolpyruvate (PEP) to the 5-hydroxyl of shikimate-3-phosphate (S3P) to produce enolpyruvyl shikimate-3-phosphate and inorganic phosphate. This Desulfitobacterium hafniense (strain DSM 10664 / DCB-2) protein is 3-phosphoshikimate 1-carboxyvinyltransferase.